Consider the following 599-residue polypeptide: Elongation factor 4 (599 aa).

Residues lysine 2–glutamine 184 form the tr-type G domain. GTP contacts are provided by residues aspartate 14–threonine 19 and asparagine 131–aspartate 134.

The protein belongs to the TRAFAC class translation factor GTPase superfamily. Classic translation factor GTPase family. LepA subfamily.

Its subcellular location is the cell inner membrane. It carries out the reaction GTP + H2O = GDP + phosphate + H(+). Its function is as follows. Required for accurate and efficient protein synthesis under certain stress conditions. May act as a fidelity factor of the translation reaction, by catalyzing a one-codon backward translocation of tRNAs on improperly translocated ribosomes. Back-translocation proceeds from a post-translocation (POST) complex to a pre-translocation (PRE) complex, thus giving elongation factor G a second chance to translocate the tRNAs correctly. Binds to ribosomes in a GTP-dependent manner. The chain is Elongation factor 4 from Salmonella agona (strain SL483).